Here is a 959-residue protein sequence, read N- to C-terminus: DEAD-box ATP-dependent RNA helicase rde-12 (959 aa).

Residues 1-336 (MSSFGNNAGG…EGVNAPVRAP (336 aa)) are disordered. The span at 71-97 (GRREDDRSHSRDNHGGSRYGERDDRGN) shows a compositional bias: basic and acidic residues. The span at 98 to 118 (NGRSADNRYSQSNYNYDSNRG) shows a compositional bias: polar residues. Residues 122-134 (YQRDNHGSKDDRG) show a composition bias toward basic and acidic residues. The segment covering 137–160 (NQYNDHGSNHNSNSRNDQYRQGSY) has biased composition (polar residues). 2 stretches are compositionally biased toward basic and acidic residues: residues 166–181 (SGYR…DNDQ) and 189–201 (RDSD…DHHN). Positions 202–213 (YNSQSSPRSHQG) are enriched in polar residues. Composition is skewed to basic and acidic residues over residues 219–239 (SAPK…HDSY) and 255–270 (YRND…DHRS). Over residues 271–280 (GGNNSSSGFK) the composition is skewed to low complexity. The segment covering 281–301 (NDGGFGGNDNRGFGNNGGGSF) has biased composition (gly residues). Residues 302-317 (GNPNNSYRGNSNNIGG) show a composition bias toward low complexity. The Q motif motif lies at 380 to 408 (TSWTNSGLHPTILETLKRIKYNNVRTIQG). The Helicase ATP-binding domain occupies 411–599 (IPQVLDGHDV…NELMKRLPGQ (189 aa)). Residue 424–431 (AETSAGKT) participates in ATP binding. The short motif at 539-542 (DEAD) is the DEAD box element. The Helicase C-terminal domain occupies 632 to 792 (KLREILKQNV…KVPDFLDAMA (161 aa)). Disordered stretches follow at residues 793-834 (KSSR…GGGR) and 858-959 (GGGG…DDEW). 2 stretches are compositionally biased toward gly residues: residues 800-834 (GTSG…GGGR) and 858-872 (GGGG…GFGG). The span at 930–941 (TLGSSTFGTANN) shows a compositional bias: polar residues. Positions 942–959 (ADEEPTETGADGNDDDEW) are enriched in acidic residues.

This sequence belongs to the DEAD box helicase family. DDX3/DED1 subfamily. In terms of assembly, interacts with wago-1, ergo-1 and rde-1. Mg(2+) serves as cofactor. Expressed in the soma and germline.

Its subcellular location is the cytoplasm. The protein localises to the perinuclear region. It localises to the cytoplasmic granule. The protein resides in the P-body. It catalyses the reaction ATP + H2O = ADP + phosphate + H(+). Functionally, probable ATP-dependent RNA helicase involved in RNAi-mediated gene silencing. Specifically required in the endogenous siRNA pathway for biogenesis of secondary endogenous small interfering RNA (siRNA) intermediates called 22G-RNAs. May associate with and recruit rde-10 to primary siRNA-targeted mRNA for secondary siRNA synthesis. May be recruited to target mRNAs by rde-1 and/or ergo-1. This Caenorhabditis elegans protein is DEAD-box ATP-dependent RNA helicase rde-12.